Reading from the N-terminus, the 359-residue chain is Peptide chain release factor 1 (359 aa).

Gln236 is subject to N5-methylglutamine.

The protein belongs to the prokaryotic/mitochondrial release factor family. Post-translationally, methylated by PrmC. Methylation increases the termination efficiency of RF1.

Its subcellular location is the cytoplasm. Its function is as follows. Peptide chain release factor 1 directs the termination of translation in response to the peptide chain termination codons UAG and UAA. This chain is Peptide chain release factor 1, found in Lacticaseibacillus casei (strain BL23) (Lactobacillus casei).